Here is a 442-residue protein sequence, read N- to C-terminus: Probable carboxypeptidase PAAG_00768 (442 aa).

Positions 1 to 20 (MKLQYLVALLFVQAVPPVTA) are cleaved as a signal peptide. An N-linked (GlcNAc...) asparagine glycan is attached at Asn102. Zn(2+) is bound at residue Asp160. Catalysis depends on Glu192, which acts as the Proton acceptor. Glu193 contributes to the Zn(2+) binding site. A glycan (N-linked (GlcNAc...) asparagine) is linked at Asn343.

This sequence belongs to the peptidase M20A family. Zn(2+) serves as cofactor.

The protein localises to the secreted. In Paracoccidioides lutzii (strain ATCC MYA-826 / Pb01) (Paracoccidioides brasiliensis), this protein is Probable carboxypeptidase PAAG_00768.